The following is a 303-amino-acid chain: N-acetyl-D-glucosamine kinase (303 aa).

ATP is bound by residues 4–11 (GFDVGGTK) and 133–140 (GFGGGLIF). Residues histidine 157, cysteine 177, cysteine 179, and cysteine 184 each coordinate Zn(2+).

Belongs to the ROK (NagC/XylR) family. NagK subfamily.

It catalyses the reaction N-acetyl-D-glucosamine + ATP = N-acetyl-D-glucosamine 6-phosphate + ADP + H(+). It participates in cell wall biogenesis; peptidoglycan recycling. Its function is as follows. Catalyzes the phosphorylation of N-acetyl-D-glucosamine (GlcNAc) derived from cell-wall degradation, yielding GlcNAc-6-P. The sequence is that of N-acetyl-D-glucosamine kinase from Aliivibrio fischeri (strain ATCC 700601 / ES114) (Vibrio fischeri).